A 510-amino-acid chain; its full sequence is Fumarate hydratase, mitochondrial (510 aa).

Residues 1-44 (MYRALRLLARSRPLVRAPAAALASAPGLGGAAVPSFWPPNAARM) constitute a mitochondrion transit peptide. Lys-61, Lys-66, and Lys-80 each carry N6-acetyllysine; alternate. N6-succinyllysine; alternate is present on residues Lys-61, Lys-66, and Lys-80. A phosphothreonine mark is found at Thr-85 and Thr-90. Residue Lys-94 is modified to N6-acetyllysine. Lys-115 and Lys-122 each carry N6-acetyllysine; alternate. Lys-115 and Lys-122 each carry N6-succinyllysine; alternate. Substrate is bound by residues 145-147 (SGT), 176-179 (HPND), and 186-188 (SSN). Lys-213 carries the post-translational modification N6-acetyllysine. Lys-223 is modified (N6-acetyllysine; alternate). Lys-223 bears the N6-succinyllysine; alternate mark. Thr-234 is a substrate binding site. His-235 (proton donor/acceptor) is an active-site residue. Residue Thr-236 is modified to Phosphothreonine; by PRKDC. N6-acetyllysine is present on Lys-256. At Lys-292 the chain carries N6-acetyllysine; alternate. N6-succinyllysine; alternate is present on Lys-292. Ser-365 is an active-site residue. Substrate contacts are provided by residues Ser-366 and 371-373 (KVN). Ser-366 is modified (phosphoserine). N6-succinyllysine occurs at positions 467 and 473. N6-acetyllysine is present on Lys-502.

It belongs to the class-II fumarase/aspartase family. Fumarase subfamily. As to quaternary structure, homotetramer. Interacts with H2AZ1. Phosphorylation at Thr-236 by PRKDC in response to DNA damage promotes translocation to the nucleus and recruitment to DNA double-strand breaks (DSBs). As to expression, expressed in red blood cells; underexpressed in red blood cells (cytoplasm) of patients with hereditary non-spherocytic hemolytic anemia of unknown etiology.

The protein resides in the mitochondrion. The protein localises to the cytoplasm. It is found in the cytosol. Its subcellular location is the nucleus. It localises to the chromosome. The enzyme catalyses (S)-malate = fumarate + H2O. It functions in the pathway carbohydrate metabolism; tricarboxylic acid cycle; (S)-malate from fumarate: step 1/1. Catalyzes the reversible stereospecific interconversion of fumarate to L-malate. Experiments in other species have demonstrated that specific isoforms of this protein act in defined pathways and favor one direction over the other. Its function is as follows. Catalyzes the hydration of fumarate to L-malate in the tricarboxylic acid (TCA) cycle to facilitate a transition step in the production of energy in the form of NADH. In terms of biological role, catalyzes the dehydration of L-malate to fumarate. Fumarate metabolism in the cytosol plays a role during urea cycle and arginine metabolism; fumarate being a by-product of the urea cycle and amino-acid catabolism. Also plays a role in DNA repair by promoting non-homologous end-joining (NHEJ). In response to DNA damage and phosphorylation by PRKDC, translocates to the nucleus and accumulates at DNA double-strand breaks (DSBs): acts by catalyzing formation of fumarate, an inhibitor of KDM2B histone demethylase activity, resulting in enhanced dimethylation of histone H3 'Lys-36' (H3K36me2). The sequence is that of Fumarate hydratase, mitochondrial from Homo sapiens (Human).